A 427-amino-acid chain; its full sequence is Enolase (427 aa).

Residue Gln-163 participates in (2R)-2-phosphoglycerate binding. The Proton donor role is filled by Glu-205. Mg(2+) is bound by residues Asp-242, Glu-285, and Asp-312. Residues Lys-337, Arg-366, Ser-367, and Lys-388 each contribute to the (2R)-2-phosphoglycerate site. The Proton acceptor role is filled by Lys-337.

The protein belongs to the enolase family. Mg(2+) serves as cofactor.

It is found in the cytoplasm. The protein resides in the secreted. It localises to the cell surface. The catalysed reaction is (2R)-2-phosphoglycerate = phosphoenolpyruvate + H2O. The protein operates within carbohydrate degradation; glycolysis; pyruvate from D-glyceraldehyde 3-phosphate: step 4/5. Functionally, catalyzes the reversible conversion of 2-phosphoglycerate (2-PG) into phosphoenolpyruvate (PEP). It is essential for the degradation of carbohydrates via glycolysis. This chain is Enolase, found in Herminiimonas arsenicoxydans.